A 288-amino-acid chain; its full sequence is Acetyl-coenzyme A carboxylase carboxyl transferase subunit beta (288 aa).

Positions 32 to 288 (MWAKCPSCKR…LRLHSLEGWR (257 aa)) constitute a CoA carboxyltransferase N-terminal domain. Zn(2+)-binding residues include Cys36, Cys39, Cys54, and Cys57. The C4-type zinc-finger motif lies at 36–57 (CPSCKRTLYTKEMGAEKICPHC).

This sequence belongs to the AccD/PCCB family. In terms of assembly, acetyl-CoA carboxylase is a heterohexamer composed of biotin carboxyl carrier protein (AccB), biotin carboxylase (AccC) and two subunits each of ACCase subunit alpha (AccA) and ACCase subunit beta (AccD). It depends on Zn(2+) as a cofactor.

It localises to the cytoplasm. The catalysed reaction is N(6)-carboxybiotinyl-L-lysyl-[protein] + acetyl-CoA = N(6)-biotinyl-L-lysyl-[protein] + malonyl-CoA. The protein operates within lipid metabolism; malonyl-CoA biosynthesis; malonyl-CoA from acetyl-CoA: step 1/1. Its function is as follows. Component of the acetyl coenzyme A carboxylase (ACC) complex. Biotin carboxylase (BC) catalyzes the carboxylation of biotin on its carrier protein (BCCP) and then the CO(2) group is transferred by the transcarboxylase to acetyl-CoA to form malonyl-CoA. The chain is Acetyl-coenzyme A carboxylase carboxyl transferase subunit beta from Enterococcus faecalis (strain ATCC 700802 / V583).